A 206-amino-acid polypeptide reads, in one-letter code: Thymidylate kinase (206 aa).

11-18 lines the ATP pocket; sequence GIDGAGKT.

This sequence belongs to the thymidylate kinase family.

It carries out the reaction dTMP + ATP = dTDP + ADP. Its function is as follows. Phosphorylation of dTMP to form dTDP in both de novo and salvage pathways of dTTP synthesis. This chain is Thymidylate kinase, found in Paraburkholderia xenovorans (strain LB400).